A 444-amino-acid polypeptide reads, in one-letter code: Glutamate--tRNA ligase 1 (444 aa).

The 'HIGH' region signature appears at 7–17 (PSPTGYLHVGN). A 'KMSKS' region motif is present at residues 238-242 (KISKR). Position 241 (lysine 241) interacts with ATP.

The protein belongs to the class-I aminoacyl-tRNA synthetase family. Glutamate--tRNA ligase type 1 subfamily. Monomer.

The protein localises to the cytoplasm. It catalyses the reaction tRNA(Glu) + L-glutamate + ATP = L-glutamyl-tRNA(Glu) + AMP + diphosphate. Catalyzes the attachment of glutamate to tRNA(Glu) in a two-step reaction: glutamate is first activated by ATP to form Glu-AMP and then transferred to the acceptor end of tRNA(Glu). This chain is Glutamate--tRNA ligase 1, found in Wolbachia pipientis subsp. Culex pipiens (strain wPip).